The sequence spans 118 residues: ATP synthase subunit g, mitochondrial (118 aa).

As to quaternary structure, F-type ATP synthases have 2 components, the catalytic core F(1) and the membrane-embedded component F(0), linked together by a central stalk and a peripheral stalk. The central stalk, also called rotor shaft, is often seen as part of F(1). The peripheral stalk is seen as part of F(0). F(0) contains the membrane channel next to the rotor. F-type ATP synthases form dimers but each monomer functions independently in ATP generation. The dimer consists of 18 different polypeptides: ATP1 (subunit alpha, part of F(1), 3 molecules per monomer), ATP2 (subunit beta, part of F(1), 3 molecules per monomer), ATP3 (subunit gamma, part of the central stalk), ATP4 (subunit b, part of the peripheral stalk), ATP5/OSCP (subunit 5/OSCP, part of the peripheral stalk), ATP6 (subunit a, part of the peripheral stalk), ATP7 (subunit d, part of the peripheral stalk), ATP8 (subunit 8, part of the peripheral stalk), OLI1 (subunit c, part of the rotor, 10 molecules per monomer), ATP14 (subunit h, part of the peripheral stalk), ATP15 (subunit epsilon, part of the central stalk), ATP16 (subunit delta, part of the central stalk), ATP17 (subunit f, part of the peripheral stalk), ATP18 (subunit i/j, part of the peripheral stalk). Dimer-specific subunits are ATP19 (subunit k, at interface between monomers), ATP20 (subunit g, at interface between monomers), TIM11 (subunit e, at interface between monomers). Also contains subunit L.

The protein resides in the mitochondrion inner membrane. In terms of biological role, mitochondrial membrane ATP synthase (F(1)F(0) ATP synthase or Complex V) produces ATP from ADP in the presence of a proton gradient across the membrane which is generated by electron transport complexes of the respiratory chain. F-type ATP synthases consist of two structural domains, F(1) - containing the extramembraneous catalytic core, and F(0) - containing the membrane proton channel, linked together by a central stalk and a peripheral stalk. During catalysis, ATP synthesis in the catalytic domain of F(1) is coupled via a rotary mechanism of the central stalk subunits to proton translocation. Part of the complex F(0) domain Minor subunit located with subunit a/ATP6 in the membrane. Together with subunit e/TIM11, probably contributes to membrane curvature at the site of the ATP synthase dimer, ultimately contributing to formation of cristae. This chain is ATP synthase subunit g, mitochondrial, found in Pichia angusta (Yeast).